A 400-amino-acid polypeptide reads, in one-letter code: MDSSAAPTNASNCTDALAYSSCSPAPSPGSWVNLSHLDGNLSDPCGPNRTDLGGRDSLCPPTGSPSMITAITIMALYSIVCVVGLFGNFLVMYVIVRYTKMKTATNIYIFNLALADALATSTLPFQSVNYLMGTWPFGTILCKIVISIDYYNMFTSIFTLCTMSVDRYIAVCHPVKALDFRTPRNAKIINVCNWILSSAIGLPVMFMATTKYRQGSIDCTLTFSHPTWYWENLLKICVFIFAFIMPVLIITVCYGLMILRLKSVRMLSGSKEKDRNLRRITRMVLVVVAVFIVCWTPIHIYVIIKALVTIPETTFQTVSWHFCIALGYTNSCLNPVLYAFLDENFKRCFREFCIPTSSNIEQQNSTRIRQNTRDHPSTANTVDRTNHQLENLEAETAPLP.

Topologically, residues 1–68 (MDSSAAPTNA…CPPTGSPSMI (68 aa)) are extracellular. 5 N-linked (GlcNAc...) asparagine glycosylation sites follow: asparagine 9, asparagine 12, asparagine 33, asparagine 40, and asparagine 48. Residues 69–93 (TAITIMALYSIVCVVGLFGNFLVMY) form a helical membrane-spanning segment. Residues 94–106 (VIVRYTKMKTATN) lie on the Cytoplasmic side of the membrane. The chain crosses the membrane as a helical span at residues 107–131 (IYIFNLALADALATSTLPFQSVNYL). The Extracellular segment spans residues 132–142 (MGTWPFGTILC). The cysteines at positions 142 and 219 are disulfide-linked. The helical transmembrane segment at 143–165 (KIVISIDYYNMFTSIFTLCTMSV) threads the bilayer. Residues 166–185 (DRYIAVCHPVKALDFRTPRN) lie on the Cytoplasmic side of the membrane. Tyrosine 168 is modified (phosphotyrosine). A helical transmembrane segment spans residues 186-207 (AKIINVCNWILSSAIGLPVMFM). Over 208-230 (ATTKYRQGSIDCTLTFSHPTWYW) the chain is Extracellular. The helical transmembrane segment at 231–255 (ENLLKICVFIFAFIMPVLIITVCYG) threads the bilayer. The Cytoplasmic portion of the chain corresponds to 256 to 279 (LMILRLKSVRMLSGSKEKDRNLRR). The chain crosses the membrane as a helical span at residues 280-306 (ITRMVLVVVAVFIVCWTPIHIYVIIKA). Over 307 to 314 (LVTIPETT) the chain is Extracellular. A helical transmembrane segment spans residues 315-338 (FQTVSWHFCIALGYTNSCLNPVLY). Positions 334–338 (NPVLY) match the NPxxY; plays a role in stabilizing the activated conformation of the receptor motif. The Cytoplasmic segment spans residues 339 to 400 (AFLDENFKRC…NLEAETAPLP (62 aa)). A lipid anchor (S-palmitoyl cysteine) is attached at cysteine 353. Residue serine 365 is modified to Phosphoserine. A Phosphothreonine modification is found at threonine 372. Serine 377 bears the Phosphoserine mark. Threonine 396 bears the Phosphothreonine mark.

This sequence belongs to the G-protein coupled receptor 1 family. In terms of assembly, forms homooligomers and heterooligomers with other GPCRs, such as OPRD1, OPRK1, OPRL1, NPFFR2, ADRA2A, SSTR2, CNR1 and CCR5 (probably in dimeric forms). Interacts with heterotrimeric G proteins; interaction with a heterotrimeric complex containing GNAI1, GNB1 and GNG2 stabilizes the active conformation of the receptor and increases its affinity for endomorphin-2, the synthetic opioid peptide DAMGO and for morphinan agonists. Interacts with PPL; the interaction disrupts agonist-mediated G-protein activation. Interacts (via C-terminus) with DNAJB4 (via C-terminus). Interacts with calmodulin; the interaction inhibits the constitutive activity of OPRM1; it abolishes basal and attenuates agonist-stimulated G-protein coupling. Interacts with FLNA, PLD2, RANBP9 and WLS and GPM6A. Interacts with RTP4. Interacts with SYP and GNAS. Interacts with RGS9, RGS17, RGS20, RGS4, PPP1R9B and HINT1. In terms of processing, phosphorylated. Differentially phosphorylated in basal and agonist-induced conditions. Agonist-mediated phosphorylation modulates receptor internalization. Phosphorylated by GRK2 in a agonist-dependent manner. Phosphorylation at Tyr-168 requires receptor activation, is dependent on non-receptor protein tyrosine kinase Src and results in a decrease in agonist efficacy by reducing G-protein coupling efficiency. Phosphorylated on tyrosine residues; the phosphorylation is involved in agonist-induced G-protein-independent receptor down-regulation. Phosphorylation at Ser-377 is involved in G-protein-dependent but not beta-arrestin-dependent activation of the ERK pathway. Ubiquitinated. A basal ubiquitination seems not to be related to degradation. Ubiquitination is increased upon formation of OPRM1:OPRD1 oligomers leading to proteasomal degradation; the ubiquitination is diminished by RTP4. In terms of tissue distribution, expressed in brain. Isoform 16 and isoform 17 are detected in brain.

It is found in the cell membrane. It localises to the cell projection. The protein resides in the axon. Its subcellular location is the perikaryon. The protein localises to the dendrite. It is found in the endosome. It localises to the cytoplasm. Functionally, receptor for endogenous opioids such as beta-endorphin and endomorphin. Receptor for natural and synthetic opioids including morphine, heroin, DAMGO, fentanyl, etorphine, buprenorphin and methadone. Also activated by enkephalin peptides, such as Met-enkephalin or Met-enkephalin-Arg-Phe, with higher affinity for Met-enkephalin-Arg-Phe. Agonist binding to the receptor induces coupling to an inactive GDP-bound heterotrimeric G-protein complex and subsequent exchange of GDP for GTP in the G-protein alpha subunit leading to dissociation of the G-protein complex with the free GTP-bound G-protein alpha and the G-protein beta-gamma dimer activating downstream cellular effectors. The agonist- and cell type-specific activity is predominantly coupled to pertussis toxin-sensitive G(i) and G(o) G alpha proteins, GNAI1, GNAI2, GNAI3 and GNAO1 isoforms Alpha-1 and Alpha-2, and to a lesser extent to pertussis toxin-insensitive G alpha proteins GNAZ and GNA15. They mediate an array of downstream cellular responses, including inhibition of adenylate cyclase activity and both N-type and L-type calcium channels, activation of inward rectifying potassium channels, mitogen-activated protein kinase (MAPK), phospholipase C (PLC), phosphoinositide/protein kinase (PKC), phosphoinositide 3-kinase (PI3K) and regulation of NF-kappa-B. Also couples to adenylate cyclase stimulatory G alpha proteins. The selective temporal coupling to G-proteins and subsequent signaling can be regulated by RGSZ proteins, such as RGS9, RGS17 and RGS4. Phosphorylation by members of the GPRK subfamily of Ser/Thr protein kinases and association with beta-arrestins is involved in short-term receptor desensitization. Beta-arrestins associate with the GPRK-phosphorylated receptor and uncouple it from the G-protein thus terminating signal transduction. The phosphorylated receptor is internalized through endocytosis via clathrin-coated pits which involves beta-arrestins. The activation of the ERK pathway occurs either in a G-protein-dependent or a beta-arrestin-dependent manner and is regulated by agonist-specific receptor phosphorylation. Acts as a class A G-protein coupled receptor (GPCR) which dissociates from beta-arrestin at or near the plasma membrane and undergoes rapid recycling. Receptor down-regulation pathways are varying with the agonist and occur dependent or independent of G-protein coupling. Endogenous ligands induce rapid desensitization, endocytosis and recycling. Heterooligomerization with other GPCRs can modulate agonist binding, signaling and trafficking properties. Its function is as follows. Couples to GNAS and is proposed to be involved in excitatory effects. Does not bind agonists but may act through oligomerization with binding-competent OPRM1 isoforms and reduce their ligand binding activity. The sequence is that of Mu-type opioid receptor (OPRM1) from Homo sapiens (Human).